The following is a 1296-amino-acid chain: Phosphoribosylformylglycinamidine synthase (1296 aa).

The tract at residues 300–325 (APFSGAATGSGGEIRDEGATGRGSKP) is disordered. Residues 304–315 (GAATGSGGEIRD) and A675 each bind ATP. Positions 715, 719, and 885 each coordinate Mg(2+). S887 is an ATP binding site. The region spanning 1043 to 1296 (MAILREQGVN…MFRNARKNVG (254 aa)) is the Glutamine amidotransferase type-1 domain. The Nucleophile role is filled by C1136. Positions 1232 to 1253 (TQYPANPNGSPEGITGITSTDG) are disordered. Catalysis depends on residues H1261 and E1263.

The protein in the N-terminal section; belongs to the FGAMS family. Monomer.

The protein localises to the cytoplasm. The enzyme catalyses N(2)-formyl-N(1)-(5-phospho-beta-D-ribosyl)glycinamide + L-glutamine + ATP + H2O = 2-formamido-N(1)-(5-O-phospho-beta-D-ribosyl)acetamidine + L-glutamate + ADP + phosphate + H(+). It functions in the pathway purine metabolism; IMP biosynthesis via de novo pathway; 5-amino-1-(5-phospho-D-ribosyl)imidazole from N(2)-formyl-N(1)-(5-phospho-D-ribosyl)glycinamide: step 1/2. Phosphoribosylformylglycinamidine synthase involved in the purines biosynthetic pathway. Catalyzes the ATP-dependent conversion of formylglycinamide ribonucleotide (FGAR) and glutamine to yield formylglycinamidine ribonucleotide (FGAM) and glutamate. The protein is Phosphoribosylformylglycinamidine synthase of Pseudoalteromonas translucida (strain TAC 125).